The sequence spans 500 residues: ATP synthase subunit alpha (500 aa).

168–175 (GDRQTGKT) contacts ATP.

The protein belongs to the ATPase alpha/beta chains family. As to quaternary structure, F-type ATPases have 2 components, CF(1) - the catalytic core - and CF(0) - the membrane proton channel. CF(1) has five subunits: alpha(3), beta(3), gamma(1), delta(1), epsilon(1). CF(0) has three main subunits: a(1), b(2) and c(9-12). The alpha and beta chains form an alternating ring which encloses part of the gamma chain. CF(1) is attached to CF(0) by a central stalk formed by the gamma and epsilon chains, while a peripheral stalk is formed by the delta and b chains.

Its subcellular location is the cell membrane. It carries out the reaction ATP + H2O + 4 H(+)(in) = ADP + phosphate + 5 H(+)(out). In terms of biological role, produces ATP from ADP in the presence of a proton gradient across the membrane. The alpha chain is a regulatory subunit. This chain is ATP synthase subunit alpha, found in Streptococcus suis (strain 98HAH33).